The primary structure comprises 279 residues: Fatty acid desaturase 4-like 2, chloroplastic (279 aa).

The transit peptide at 1 to 30 (MATSLQTKYTLNPITNNIPRSHRPSFLRVT) directs the protein to the chloroplast. The next 3 membrane-spanning stretches (helical) occupy residues 68–90 (LWVAAGCTTVFVSFSKSIIGAFG), 98–118 (SLAGFAGYILADLGSGVYHWA), and 178–198 (VVHGFVSMFAFCVLFCQLFHA).

This sequence belongs to the fatty acid desaturase CarF family.

The protein resides in the plastid. It localises to the chloroplast membrane. It functions in the pathway lipid metabolism; fatty acid metabolism. Functionally, fatty acid desaturase involved in the production of chloroplast-specific phosphatidylglycerol molecular species. Catalyzes the formation of a trans double bond introduced close to the carboxyl group of palmitic acid, which is specifically esterified to the sn-2 glyceryl carbon of phosphatidylglycerol. This is Fatty acid desaturase 4-like 2, chloroplastic (FAD4L2) from Arabidopsis thaliana (Mouse-ear cress).